The chain runs to 126 residues: Large ribosomal subunit protein bL17 (126 aa).

It belongs to the bacterial ribosomal protein bL17 family. In terms of assembly, part of the 50S ribosomal subunit. Contacts protein L32.

The sequence is that of Large ribosomal subunit protein bL17 from Xylella fastidiosa (strain M12).